Reading from the N-terminus, the 711-residue chain is MSRTIILIPVSTGVGLTSISLGLIHSLEQKGTKVAFMKPVSQPSTGEDKLDRTTSIIRTSTSLETAEPFMLSVAESLIGQNQSDVLLEKIVANHQQLTKNNDIVVVEGLIPTRKHGYANSINYEIAQALDAEIVLVAAPATETPTELKDRVEAAASLFGGKNNPNLLGVVVNKFNAPVDESGRTRPDLAEIFDSFQHNHISETEVNKLFAGSAIKLLACVPWNANLIATRAIDLVKHLGASIINEGEINRRIRGITFCARSLPNMVEHFRAGSLLVASADRPDVLVAAALAASNGIEIGGILLTGGYKIDAQINKLCRPTFEKAKLPIFRIEGNTWQTALSLQSFNLEVPVDDKERIENIKQYISQHFNADFINNLVADSSRLPRLSPPAFRFQLTELARAAKKRIVLPEGDEPRTIKAAVLCAERGIAECVLLADPASVQRVAEAQGVKLGKGITIINPADVRENYVDRLVELRKAKGMTETAAREQLEDTVVLGTMMLEANEVDGLVSGAVHTTANTIRPPMQIIKTAPGSSIVSSIFFMLLPDQVLVYGDCAVNPDPTAEQLAEIAIQSADSAKAFGIDPKVAMISYSTGTSGSGADVEKVKEATRIAKEKRPDLLIDGPLQYDAAVMEDVARSKAPNSPVAGKATVFVFPDLNTGNTTYKAVQRSADLVSIGPMLQGMRKPVNDLSRGALVDDIVYTIALTAIQATQ.

The tract at residues alanine 390–glutamine 711 is phosphate acetyltransferase.

This sequence in the N-terminal section; belongs to the CobB/CobQ family. It in the C-terminal section; belongs to the phosphate acetyltransferase and butyryltransferase family. In terms of assembly, homohexamer.

It localises to the cytoplasm. The catalysed reaction is acetyl-CoA + phosphate = acetyl phosphate + CoA. It functions in the pathway metabolic intermediate biosynthesis; acetyl-CoA biosynthesis; acetyl-CoA from acetate: step 2/2. Functionally, involved in acetate metabolism. This Haemophilus influenzae (strain ATCC 51907 / DSM 11121 / KW20 / Rd) protein is Phosphate acetyltransferase (pta).